A 299-amino-acid chain; its full sequence is Non-structural protein NS-S (299 aa).

The tract at residues proline 66–proline 69 is involved in inclusion bodies formation. Residues phenylalanine 148 to alanine 220 are interaction with host TNIP2.

This sequence belongs to the Bandavirus NS-S protein family. Interacts with host TBK1; this interaction antagonizes TBK1 phosphorylation and inhibits TBK1-IRF3 interaction. Interacts with host STAT2; this interaction blocks the nuclear translocation and activation of host STAT2. Interacts with host TNIP2.

It localises to the host cytoplasm. Functionally, plays a role in the inhibition of host RLR-induced interferon-beta activation by inhibiting the phosphorylation of TANK-binding kinase 1/TBK1, thereby blocking IRF3 activation and preventing the establishment of an antiviral state. Also blocks IFN-triggered nuclear translocation and activation of host STAT2. The chain is Non-structural protein NS-S (NSS) from Alces americanus (American moose).